The following is a 200-amino-acid chain: ATP-dependent Clp protease proteolytic subunit (200 aa).

The active-site Nucleophile is S101. Residue H126 is part of the active site.

It belongs to the peptidase S14 family. In terms of assembly, component of the chloroplastic Clp protease core complex.

It is found in the plastid. The protein resides in the chloroplast stroma. The catalysed reaction is Hydrolysis of proteins to small peptides in the presence of ATP and magnesium. alpha-casein is the usual test substrate. In the absence of ATP, only oligopeptides shorter than five residues are hydrolyzed (such as succinyl-Leu-Tyr-|-NHMec, and Leu-Tyr-Leu-|-Tyr-Trp, in which cleavage of the -Tyr-|-Leu- and -Tyr-|-Trp bonds also occurs).. Cleaves peptides in various proteins in a process that requires ATP hydrolysis. Has a chymotrypsin-like activity. Plays a major role in the degradation of misfolded proteins. In Adiantum capillus-veneris (Maidenhair fern), this protein is ATP-dependent Clp protease proteolytic subunit.